The primary structure comprises 327 residues: MKKVSVIMPTFNNGEKLHRTISSVLNQTMKSTDYELIIIDDHSNDNGETLNVIKKYKGLVRFKQLKKNSGNASVPRNTGLKMSKAEYVFFLDSDDLLHERALEDLYNYGKENNSDLIIGKYGVEGKGRSVPKAIFEKGNVAKADIIDNSIFYALSVLKMFKKSVIDKNKIKFKTFSKTAEDQLFTIEFLMNSKNYSIKTDYEYYIVVNDFESSNHLSVNKSTGNQYFATINEIYKAIYKSPIYKNQEKRHQLAGKYTTRLLRHGQKKNFANSKMKYEDKIEWLNNFSKTINKVPRDSDKYVTQIFNLKLEAIRQNDLLAVMIADKLL.

UDP-N-acetyl-alpha-D-glucosamine contacts are provided by residues P9, D41, N68, R76, and 92–94 (DSD). D94 is a binding site for Mn(2+). The active-site Proton acceptor is D181.

Belongs to the glycosyltransferase 2 family. In terms of assembly, homotrimer. Requires Mn(2+) as cofactor.

The enzyme catalyses 4-O-[(D-ribitylphospho)(n)-di{(2R)-glycerylphospho}]-N-acetyl-beta-D-mannosaminyl-(1-&gt;4)-N-acetyl-alpha-D-glucosaminyl di-trans,octa-cis-undecaprenyl diphosphate + n UDP-N-acetyl-alpha-D-glucosamine = 4-O-([3-N-acetyl-beta-D-glucosaminyl-1-D-ribitylphospho](n)-di{[2R]-1-glycerylphospho})-N-acetyl-beta-D-mannosaminyl-(1-&gt;4)-N-acetyl-alpha-D-glucosaminyl di-trans,octa-cis-undecaprenyl diphosphate + n UDP + n H(+). Its pathway is cell wall biogenesis; poly(ribitol phosphate) teichoic acid biosynthesis. In terms of biological role, attaches beta-O-GlcNAc (beta-O-N-acetyl-D-glucosamine) residues to the C3 position of poly(RboP)-wall teichoic acids (WTAs). Attenuates immunogenicity of WTA and protects S.aureus against adaptative host defenses by allowing bacteria to evade recognition by preexisting anti-S.aureus antibodies. Also protects the cell from podophage infection. The protein is Poly(ribitol-phosphate) beta-N-acetylglucosaminyltransferase TarP of Staphylococcus aureus (strain N315).